A 145-amino-acid chain; its full sequence is Superoxide dismutase [Mn/Fe] (145 aa).

Fe(3+)-binding residues include His-10 and His-64. Positions 10 and 64 each coordinate Mn(2+).

Belongs to the iron/manganese superoxide dismutase family. The cofactor is Mn(2+). Fe(3+) is required as a cofactor.

It catalyses the reaction 2 superoxide + 2 H(+) = H2O2 + O2. Its function is as follows. Destroys superoxide anion radicals which are normally produced within the cells and which are toxic to biological systems. Catalyzes the dismutation of superoxide anion radicals into O2 and H2O2 by successive reduction and oxidation of the transition metal ion at the active site. The chain is Superoxide dismutase [Mn/Fe] (sodA) from Streptococcus porcinus.